A 467-amino-acid chain; its full sequence is 3-isopropylmalate dehydratase large subunit (467 aa).

Residues Cys-347, Cys-407, and Cys-410 each coordinate [4Fe-4S] cluster.

It belongs to the aconitase/IPM isomerase family. LeuC type 1 subfamily. As to quaternary structure, heterodimer of LeuC and LeuD. It depends on [4Fe-4S] cluster as a cofactor.

It catalyses the reaction (2R,3S)-3-isopropylmalate = (2S)-2-isopropylmalate. It functions in the pathway amino-acid biosynthesis; L-leucine biosynthesis; L-leucine from 3-methyl-2-oxobutanoate: step 2/4. Its function is as follows. Catalyzes the isomerization between 2-isopropylmalate and 3-isopropylmalate, via the formation of 2-isopropylmaleate. The protein is 3-isopropylmalate dehydratase large subunit of Trichormus variabilis (strain ATCC 29413 / PCC 7937) (Anabaena variabilis).